Reading from the N-terminus, the 231-residue chain is Ion-translocating oxidoreductase complex subunit E (231 aa).

6 consecutive transmembrane segments (helical) span residues 18 to 38 (ALVQ…ATNA), 39 to 59 (LGLG…ISTL), 63 to 83 (TPAE…VSAV), 86 to 106 (LINA…PLIV), 125 to 145 (ALSA…MFVL), and 182 to 202 (PFLL…MLAG).

It belongs to the NqrDE/RnfAE family. As to quaternary structure, the complex is composed of six subunits: RsxA, RsxB, RsxC, RsxD, RsxE and RsxG.

The protein localises to the cell inner membrane. Its function is as follows. Part of a membrane-bound complex that couples electron transfer with translocation of ions across the membrane. Required to maintain the reduced state of SoxR. The sequence is that of Ion-translocating oxidoreductase complex subunit E from Escherichia coli O6:H1 (strain CFT073 / ATCC 700928 / UPEC).